The primary structure comprises 48 residues: Large ribosomal subunit protein bL33B (48 aa).

This sequence belongs to the bacterial ribosomal protein bL33 family.

This chain is Large ribosomal subunit protein bL33B, found in Lactococcus lactis subsp. cremoris (strain MG1363).